The following is a 273-amino-acid chain: NAD kinase (273 aa).

Aspartate 53 serves as the catalytic Proton acceptor. Residues 53 to 54 (DG), arginine 58, 128 to 129 (NE), aspartate 157, 168 to 173 (TAYNFS), and alanine 192 contribute to the NAD(+) site.

It belongs to the NAD kinase family. A divalent metal cation is required as a cofactor.

Its subcellular location is the cytoplasm. The catalysed reaction is NAD(+) + ATP = ADP + NADP(+) + H(+). In terms of biological role, involved in the regulation of the intracellular balance of NAD and NADP, and is a key enzyme in the biosynthesis of NADP. Catalyzes specifically the phosphorylation on 2'-hydroxyl of the adenosine moiety of NAD to yield NADP. This is NAD kinase from Finegoldia magna (strain ATCC 29328 / DSM 20472 / WAL 2508) (Peptostreptococcus magnus).